The primary structure comprises 218 residues: Cytochrome b6 (218 aa).

The helical transmembrane segment at 35–55 (IFYCLGGITLVCFLVQFATGF) threads the bilayer. Residue Cys-38 coordinates heme c. Positions 89 and 103 each coordinate heme b. The next 3 helical transmembrane spans lie at 93 to 113 (ASMM…TGGF), 119 to 139 (LTWV…VTGY), and 189 to 209 (LHTF…FLMI). 2 residues coordinate heme b: His-190 and His-205.

Belongs to the cytochrome b family. PetB subfamily. The 4 large subunits of the cytochrome b6-f complex are cytochrome b6, subunit IV (17 kDa polypeptide, PetD), cytochrome f and the Rieske protein, while the 4 small subunits are PetG, PetL, PetM and PetN. The complex functions as a dimer. It depends on heme b as a cofactor. Heme c is required as a cofactor.

Its subcellular location is the cellular thylakoid membrane. Its function is as follows. Component of the cytochrome b6-f complex, which mediates electron transfer between photosystem II (PSII) and photosystem I (PSI), cyclic electron flow around PSI, and state transitions. The sequence is that of Cytochrome b6 from Prochlorococcus marinus (strain MIT 9303).